We begin with the raw amino-acid sequence, 360 residues long: uncharacterized protein (360 aa).

The segment covering 22 to 32 has biased composition (acidic residues); the sequence is EEDVEPNEEAE. A disordered region spans residues 22–55; sequence EEDVEPNEEAEGPGGVHKKRRGARKKNRRQRMEG. A compositionally biased stretch (basic residues) spans 37-50; the sequence is VHKKRRGARKKNRR.

This is an uncharacterized protein from Caenorhabditis elegans.